We begin with the raw amino-acid sequence, 227 residues long: Basic leucine zipper 24 (227 aa).

A disordered region spans residues 44–68; it reads EDKDQDRVTRGCSHTHSCNPPGPED. The bZIP domain maps to 94 to 160; that stretch reads DSSNKKRLCG…IRLRALLVEM (67 aa). A basic motif region spans residues 98 to 118; sequence KKRLCGNREAVRKYREKKKAR. The interval 122–129 is leucine-zipper; that stretch reads LEDEVMRL.

Homodimer. In terms of tissue distribution, expressed in young leaves and cauline leaves.

The protein localises to the nucleus. The protein resides in the cytoplasm. In terms of biological role, transcription factor involved in the regulation of salt stress response. Functions as a negative transcriptional regulator of salt stress acclimation response by regulating cation homeostasis. Negatively regulates the expression of genes contributing to ion and osmotic homeostasis during salt stress, such as the Na(+) transporter HKT1, the Na(+)/H(+) antiporter SOS1, the aquaporin PIP2-1 and the glutamine synthetase GLN1-3. In addition, targets genes with functions in plant growth and development, such as argonaute 4 (AGO4) and cyclophilin 19 (CYP19). This Arabidopsis thaliana (Mouse-ear cress) protein is Basic leucine zipper 24.